The following is a 323-amino-acid chain: Aspartate carbamoyltransferase catalytic subunit (323 aa).

Carbamoyl phosphate-binding residues include arginine 68 and threonine 69. Lysine 96 lines the L-aspartate pocket. Arginine 118, histidine 148, and glutamine 151 together coordinate carbamoyl phosphate. L-aspartate contacts are provided by arginine 181 and arginine 236. Carbamoyl phosphate is bound by residues glycine 277 and proline 278.

It belongs to the aspartate/ornithine carbamoyltransferase superfamily. ATCase family. Heterododecamer (2C3:3R2) of six catalytic PyrB chains organized as two trimers (C3), and six regulatory PyrI chains organized as three dimers (R2).

It catalyses the reaction carbamoyl phosphate + L-aspartate = N-carbamoyl-L-aspartate + phosphate + H(+). The protein operates within pyrimidine metabolism; UMP biosynthesis via de novo pathway; (S)-dihydroorotate from bicarbonate: step 2/3. Catalyzes the condensation of carbamoyl phosphate and aspartate to form carbamoyl aspartate and inorganic phosphate, the committed step in the de novo pyrimidine nucleotide biosynthesis pathway. The chain is Aspartate carbamoyltransferase catalytic subunit from Verminephrobacter eiseniae (strain EF01-2).